A 35-amino-acid chain; its full sequence is Photosystem II reaction center protein Psb30 (35 aa).

Residues 7–27 traverse the membrane as a helical segment; that stretch reads VFVQLLLLALIVLAGPAVILL.

This sequence belongs to the Psb30/Ycf12 family. In terms of assembly, PSII is composed of 1 copy each of membrane proteins PsbA, PsbB, PsbC, PsbD, PsbE, PsbF, PsbH, PsbI, PsbJ, PsbK, PsbL, PsbM, PsbT, PsbX, PsbY, PsbZ, Psb30/Ycf12, peripheral proteins PsbO, CyanoQ (PsbQ), PsbU, PsbV and a large number of cofactors. It forms dimeric complexes.

Its subcellular location is the cellular thylakoid membrane. A core subunit of photosystem II (PSII), probably helps stabilize the reaction center. In Synechococcus sp. (strain JA-3-3Ab) (Cyanobacteria bacterium Yellowstone A-Prime), this protein is Photosystem II reaction center protein Psb30.